The chain runs to 200 residues: Lipopolysaccharide core heptose(II)-phosphate phosphatase (200 aa).

Positions 1-25 are cleaved as a signal peptide; the sequence is MLAFCRSSLKSKKYFIILLALAAIA.

It belongs to the phosphoglycerate mutase family. Ais subfamily.

The protein localises to the periplasm. It participates in bacterial outer membrane biogenesis; lipopolysaccharide metabolism. Catalyzes the dephosphorylation of heptose(II) of the outer membrane lipopolysaccharide core. The protein is Lipopolysaccharide core heptose(II)-phosphate phosphatase of Escherichia coli O157:H7 (strain EC4115 / EHEC).